A 414-amino-acid chain; its full sequence is Serine--tRNA ligase (414 aa).

230 to 232 (TSE) contributes to the L-serine binding site. Position 261-263 (261-263 (RQE)) interacts with ATP. Glu-284 contacts L-serine. 348 to 351 (EISS) lines the ATP pocket. Ser-382 is an L-serine binding site.

The protein belongs to the class-II aminoacyl-tRNA synthetase family. Type-1 seryl-tRNA synthetase subfamily. Homodimer. The tRNA molecule binds across the dimer.

The protein localises to the cytoplasm. It catalyses the reaction tRNA(Ser) + L-serine + ATP = L-seryl-tRNA(Ser) + AMP + diphosphate + H(+). The enzyme catalyses tRNA(Sec) + L-serine + ATP = L-seryl-tRNA(Sec) + AMP + diphosphate + H(+). It functions in the pathway aminoacyl-tRNA biosynthesis; selenocysteinyl-tRNA(Sec) biosynthesis; L-seryl-tRNA(Sec) from L-serine and tRNA(Sec): step 1/1. Functionally, catalyzes the attachment of serine to tRNA(Ser). Is also able to aminoacylate tRNA(Sec) with serine, to form the misacylated tRNA L-seryl-tRNA(Sec), which will be further converted into selenocysteinyl-tRNA(Sec). This chain is Serine--tRNA ligase, found in Campylobacter concisus (strain 13826).